The following is a 315-amino-acid chain: Homoserine kinase (315 aa).

Position 97–107 (97–107 (PPARGLGSSAT)) interacts with ATP.

This sequence belongs to the GHMP kinase family. Homoserine kinase subfamily.

Its subcellular location is the cytoplasm. It carries out the reaction L-homoserine + ATP = O-phospho-L-homoserine + ADP + H(+). Its pathway is amino-acid biosynthesis; L-threonine biosynthesis; L-threonine from L-aspartate: step 4/5. In terms of biological role, catalyzes the ATP-dependent phosphorylation of L-homoserine to L-homoserine phosphate. This Prochlorococcus marinus (strain NATL1A) protein is Homoserine kinase.